The following is a 370-amino-acid chain: MDRRRFLTLLGSAGLTATVATAGTAKAASTGTFPGYKDSYGVLHDTTRCIGCRKCEQACNEVNKLPAPKAKFDDLTVLEKTRRTDADSWTVVNRYNAAGLDHPVFRKQQCNHCLEPACASACFVKAFTKNPDGSVTYDGSLCVGCRYCMVACPFNVPAFQYAEAFDPLIQKCTMCHPRLAEGKLPGCVEICPKEALTFGRRKDLVRIAHDRIRQNPGRYIDHVYGEQEMGGTAWMYLSGVPFSATGMNEELGTKSAPEYTAGALGAVPMVVGIWPILLTGAYAITKRKEKIAAEEQAEAVKQAVAASRAEADDKLKAALAKADKDKEAAVTREVKKAVDEARKTFEEELAAKEQPEAPEGDDAGKPGEDA.

The Cytoplasmic portion of the chain corresponds to 1-258; it reads MDRRRFLTLL…EELGTKSAPE (258 aa). 3 consecutive 4Fe-4S ferredoxin-type domains span residues 40-70, 101-132, and 133-162; these read YGVL…APKA, DHPV…KNPD, and GSVT…FQYA. 16 residues coordinate [4Fe-4S] cluster: C49, C52, C55, C59, C110, C113, C118, C122, C142, C145, C148, C152, C172, C175, C187, and C191. A helical membrane pass occupies residues 259–284; it reads YTAGALGAVPMVVGIWPILLTGAYAI. At 285 to 370 the chain is on the periplasmic side; that stretch reads TKRKEKIAAE…DDAGKPGEDA (86 aa). The segment covering 345 to 355 has biased composition (basic and acidic residues); sequence FEEELAAKEQP. The segment at 345 to 370 is disordered; it reads FEEELAAKEQPEAPEGDDAGKPGEDA.

Its subcellular location is the cell membrane. In terms of biological role, HMWC (high-molecular-weight cytochrome c precursor), ORF2, ORF3, ORF4, ORF5, ORF6 in the HMC operon form a transmembrane protein complex that allows electron flow from the periplasmic hydrogenase to the cytoplasmic enzymes that catalyze reduction of sulfates. ORF2 is a transmembrane redox protein. This is Protein DVU_0535 from Nitratidesulfovibrio vulgaris (strain ATCC 29579 / DSM 644 / CCUG 34227 / NCIMB 8303 / VKM B-1760 / Hildenborough) (Desulfovibrio vulgaris).